A 498-amino-acid polypeptide reads, in one-letter code: U4/U6 small nuclear ribonucleoprotein Prp31 (498 aa).

Coiled coils occupy residues glutamate 84–lysine 119 and aspartate 180–isoleucine 214. The Nop domain maps to isoleucine 214–glutamate 332. The interval proline 333 to arginine 356 is disordered. The Nuclear localization signal (NLS) signature appears at arginine 350 to glutamate 363.

It belongs to the PRP31 family. Identified in the spliceosome B complex. Component of the U4/U6-U5 tri-snRNP complex. Component of some MLL1/MLL complex.

The protein localises to the nucleus. The protein resides in the nucleus speckle. It localises to the cajal body. In terms of biological role, involved in pre-mRNA splicing as component of the spliceosome. Required for the assembly of the U4/U5/U6 tri-snRNP complex, one of the building blocks of the spliceosome. In Xenopus tropicalis (Western clawed frog), this protein is U4/U6 small nuclear ribonucleoprotein Prp31 (prpf31).